The primary structure comprises 945 residues: Splicing factor, suppressor of white-apricot homolog (945 aa).

Disordered regions lie at residues 1-28 and 156-185; these read MYGA…GTGT and DYYD…EENE. 2 stretches are compositionally biased toward basic and acidic residues: residues 9 to 21 and 169 to 178; these read AKPE…KEEA and PSKQREKNEA. The stretch at 211-253 is one SURP motif 1 repeat; it reads IIERTANFVCKQGAQFEIMLKAKQARNSQFDFLRFDHYLNPYY. The interval 271–301 is disordered; sequence SKNEEKKKSGPTSDNEEEDDEEDGSYLHPSL. Position 283 is a phosphoserine (Ser283). The span at 284-294 shows a compositional bias: acidic residues; it reads DNEEEDDEEDG. Position 315 is an N6-acetyllysine (Lys315). Disordered stretches follow at residues 332–355 and 403–448; these read KAQA…PSQV and SSSP…PVAI. Residues 335-352 show a composition bias toward low complexity; that stretch reads ADSSAPAPPTADGTPAQP. The span at 412–426 shows a compositional bias: pro residues; that stretch reads VPPPPGTTPPPPPTT. Residues 427-447 show a composition bias toward low complexity; it reads AEPSSGVTSTTTTTSALAPVA. One copy of the SURP motif 2 repeat lies at 458-498; sequence VIDKLAEYVARNGLKFETSVRAKNDQRFEFLQPWHQYNAYY. Disordered regions lie at residues 512–564, 589–680, and 712–921; these read GSTQ…KSTV, PLEK…QAER, and DTGV…VQSK. Residues 514-527 are compositionally biased toward low complexity; the sequence is TQAASTAEEAPTET. Positions 528-540 are enriched in acidic residues; that stretch reads AVEESGEAGEDGA. Positions 589-598 are enriched in basic and acidic residues; sequence PLEKNRVKLD. Residues Ser601 and Ser621 each carry the phosphoserine modification. A compositionally biased stretch (low complexity) spans 615–630; sequence SSVANPSPAAAPPSVA. Residues 632–686 adopt a coiled-coil conformation; it reads EEKKPQLTQEELEAKQAKQKLEDRLAAAAREKLAQASKESKEKQLQAERKRKAAL. A Phosphothreonine modification is found at Thr639. Basic and acidic residues-rich tracts occupy residues 643-679 and 733-752; these read LEAK…LQAE and KPPE…EERE. Composition is skewed to basic residues over residues 753 to 787 and 795 to 810; these read KKKK…KAKH and TVRR…RRRA. Over residues 811-821 the composition is skewed to basic and acidic residues; it reads HSPERRREERS. Residues Ser829 and Ser831 each carry the phosphoserine modification. Positions 835-861 are enriched in basic residues; that stretch reads SRKRTRSRSPHEKKKKRRSRSRTKAKA. Residues 871–894 are compositionally biased toward low complexity; that stretch reads QAAQRPSAHSAHSASISPVESRGS. Over residues 895 to 908 the composition is skewed to basic and acidic residues; it reads SQERSRGVSQEKDG. Residues Ser899 and Ser903 each carry the phosphoserine modification. The span at 909–920 shows a compositional bias: low complexity; sequence QISSAIVSSVQS.

It localises to the nucleus. Its function is as follows. Plays a role as an alternative splicing regulator. Regulates its own expression at the level of RNA processing. Also regulates the splicing of fibronectin and CD45 genes. May act, at least in part, by interaction with other R/S-containing splicing factors. Represses the splicing of MAPT/Tau exon 10. The polypeptide is Splicing factor, suppressor of white-apricot homolog (Sfswap) (Mus musculus (Mouse)).